The following is a 188-amino-acid chain: MSYLVVTIKVILITGMPGSGKSEFAKLLKERGAKVIVMSEVVRKRYSIEAKPGERLMDFAKRLREIYGDGVVARLCVEELGTSNHDLVVFDGVRSLAEVEEFKRLLGDSVYIVAVHSPPKIRYKRMIERLRSDDSKEISELIRRDREELKLGIGEVIAMADYIITNDSNYEEFKRRCEEVTDRVLKNG.

15-22 (GMPGSGKS) serves as a coordination point for ATP.

Belongs to the UPF0200 family.

The sequence is that of UPF0200 protein YG5714_1176 from Saccharolobus islandicus (strain Y.G.57.14 / Yellowstone #1) (Sulfolobus islandicus).